The primary structure comprises 153 residues: Fucose mutarotase (153 aa).

H24 (proton donor) is an active-site residue. A substrate-binding site is contributed by D32. Residue D69 is part of the active site. Residues M78, Y119, Y137, and N139 each coordinate substrate. The active site involves Y119.

The protein belongs to the RbsD / FucU family.

The enzyme catalyses alpha-L-fucose = beta-L-fucose. Functionally, involved in the interconversion between alpha- and beta-L-fucoses. This Danio rerio (Zebrafish) protein is Fucose mutarotase (fuom).